The sequence spans 258 residues: Tryptophan synthase alpha chain (258 aa).

Active-site proton acceptor residues include glutamate 52 and aspartate 63.

Belongs to the TrpA family. Tetramer of two alpha and two beta chains.

The catalysed reaction is (1S,2R)-1-C-(indol-3-yl)glycerol 3-phosphate + L-serine = D-glyceraldehyde 3-phosphate + L-tryptophan + H2O. Its pathway is amino-acid biosynthesis; L-tryptophan biosynthesis; L-tryptophan from chorismate: step 5/5. In terms of biological role, the alpha subunit is responsible for the aldol cleavage of indoleglycerol phosphate to indole and glyceraldehyde 3-phosphate. The polypeptide is Tryptophan synthase alpha chain (Streptococcus pneumoniae (strain 70585)).